A 338-amino-acid chain; its full sequence is Histidinol-phosphate aminotransferase (338 aa).

Lysine 204 carries the N6-(pyridoxal phosphate)lysine modification.

It belongs to the class-II pyridoxal-phosphate-dependent aminotransferase family. Histidinol-phosphate aminotransferase subfamily. The cofactor is pyridoxal 5'-phosphate.

It catalyses the reaction L-histidinol phosphate + 2-oxoglutarate = 3-(imidazol-4-yl)-2-oxopropyl phosphate + L-glutamate. Its pathway is amino-acid biosynthesis; L-histidine biosynthesis; L-histidine from 5-phospho-alpha-D-ribose 1-diphosphate: step 7/9. The protein is Histidinol-phosphate aminotransferase of Pyrococcus furiosus (strain ATCC 43587 / DSM 3638 / JCM 8422 / Vc1).